We begin with the raw amino-acid sequence, 258 residues long: HLA class II histocompatibility antigen, DP beta 1 chain (258 aa).

A signal peptide spans 1 to 29 (MMVLQVSAAPRTVALTALLMVLLTSVVQG). Residues 30–121 (RATPENYLFQ…LGGPMTLQRR (92 aa)) are beta-1. Over 30–225 (RATPENYLFQ…KAQSDSARSK (196 aa)) the chain is Extracellular. 2 disulfides stabilise this stretch: Cys-44-Cys-106 and Cys-144-Cys-200. The N-linked (GlcNAc...) asparagine glycan is linked to Asn-48. Residues 122–215 (VQPRVNVSPS…SLDSPVTVEW (94 aa)) are beta-2. An Ig-like C1-type domain is found at 124–212 (PRVNVSPSKK…EHTSLDSPVT (89 aa)). The interval 216 to 225 (KAQSDSARSK) is connecting peptide. The helical transmembrane segment at 226–246 (TLTGAGGFVLGLIICGVGIFM) threads the bilayer. At 247-258 (HRRSKKVQRGSA) the chain is on the cytoplasmic side.

The protein belongs to the MHC class II family. As to quaternary structure, heterodimer of an alpha and a beta subunit; also referred as MHC class II molecule. In the endoplasmic reticulum (ER) it forms a heterononamer; 3 MHC class II molecules bind to a CD74 homotrimer (also known as invariant chain or HLA class II histocompatibility antigen gamma chain). In the endosomal/lysosomal system; CD74 undergoes sequential degradation by various proteases; leaving a small fragment termed CLIP on each MHC class II molecule. MHC class II molecule interacts with HLA_DM, and HLA_DO in B-cells, in order to release CLIP and facilitate the binding of antigenic peptides.

The protein resides in the cell membrane. The protein localises to the endoplasmic reticulum membrane. It localises to the golgi apparatus. It is found in the trans-Golgi network membrane. Its subcellular location is the endosome membrane. The protein resides in the lysosome membrane. Binds peptides derived from antigens that access the endocytic route of antigen presenting cells (APC) and presents them on the cell surface for recognition by the CD4 T-cells. The peptide binding cleft accommodates peptides of 10-30 residues. The peptides presented by MHC class II molecules are generated mostly by degradation of proteins that access the endocytic route, where they are processed by lysosomal proteases and other hydrolases. Exogenous antigens that have been endocytosed by the APC are thus readily available for presentation via MHC II molecules, and for this reason this antigen presentation pathway is usually referred to as exogenous. As membrane proteins on their way to degradation in lysosomes as part of their normal turn-over are also contained in the endosomal/lysosomal compartments, exogenous antigens must compete with those derived from endogenous components. Autophagy is also a source of endogenous peptides, autophagosomes constitutively fuse with MHC class II loading compartments. In addition to APCs, other cells of the gastrointestinal tract, such as epithelial cells, express MHC class II molecules and CD74 and act as APCs, which is an unusual trait of the GI tract. To produce a MHC class II molecule that presents an antigen, three MHC class II molecules (heterodimers of an alpha and a beta chain) associate with a CD74 trimer in the ER to form a heterononamer. Soon after the entry of this complex into the endosomal/lysosomal system where antigen processing occurs, CD74 undergoes a sequential degradation by various proteases, including CTSS and CTSL, leaving a small fragment termed CLIP (class-II-associated invariant chain peptide). The removal of CLIP is facilitated by HLA-DM via direct binding to the alpha-beta-CLIP complex so that CLIP is released. HLA-DM stabilizes MHC class II molecules until primary high affinity antigenic peptides are bound. The MHC II molecule bound to a peptide is then transported to the cell membrane surface. In B-cells, the interaction between HLA-DM and MHC class II molecules is regulated by HLA-DO. Primary dendritic cells (DCs) also to express HLA-DO. Lysosomal microenvironment has been implicated in the regulation of antigen loading into MHC II molecules, increased acidification produces increased proteolysis and efficient peptide loading. This Homo sapiens (Human) protein is HLA class II histocompatibility antigen, DP beta 1 chain (HLA-DPB1).